The primary structure comprises 639 residues: Sperm-associated antigen 16 protein (639 aa).

Positions 146-218 (DVYSQVMLLE…GLKLHYASYE (73 aa)) form a coiled coil. The interval 280 to 333 (RESGDRAGHSCEKENSSEGPTQKSLREAREEVGYKSKLKNEKKDSEFPVDMQPD) is disordered. Composition is skewed to basic and acidic residues over residues 281–295 (ESGD…KENS) and 303–325 (SLRE…KDSE). 7 WD repeats span residues 358-397 (LHEL…VLLT), 400-439 (GHTD…CTLT), 442-481 (GHNH…CRYT), 484-523 (GHTD…CEQS), 526-565 (GHMH…PIVS), 568-608 (VGPS…HKLV), and 609-639 (GHES…RLWI).

Interacts with SPAG6 and STK36. In terms of processing, phosphorylated by TSSK2. In terms of tissue distribution, expressed in testis.

It is found in the cytoplasm. The protein resides in the cytoskeleton. Its subcellular location is the cilium axoneme. It localises to the flagellum axoneme. The protein localises to the cell projection. It is found in the cilium. The protein resides in the flagellum. Necessary for sperm flagellar function. Plays a role in motile ciliogenesis. May help to recruit STK36 to the cilium or apical surface of the cell to initiate subsequent steps of construction of the central pair apparatus of motile cilia. This Mus musculus (Mouse) protein is Sperm-associated antigen 16 protein (Spag16).